A 164-amino-acid polypeptide reads, in one-letter code: 2-C-methyl-D-erythritol 2,4-cyclodiphosphate synthase (164 aa).

A divalent metal cation-binding residues include aspartate 9 and histidine 11. 4-CDP-2-C-methyl-D-erythritol 2-phosphate-binding positions include 9 to 11 (DVH) and 35 to 36 (HS). An a divalent metal cation-binding site is contributed by histidine 43. 4-CDP-2-C-methyl-D-erythritol 2-phosphate is bound by residues 57 to 59 (DIG), 62 to 66 (FPDTD), 133 to 136 (TTTE), phenylalanine 140, and arginine 143.

Belongs to the IspF family. Homotrimer. A divalent metal cation serves as cofactor.

The enzyme catalyses 4-CDP-2-C-methyl-D-erythritol 2-phosphate = 2-C-methyl-D-erythritol 2,4-cyclic diphosphate + CMP. It functions in the pathway isoprenoid biosynthesis; isopentenyl diphosphate biosynthesis via DXP pathway; isopentenyl diphosphate from 1-deoxy-D-xylulose 5-phosphate: step 4/6. In terms of biological role, involved in the biosynthesis of isopentenyl diphosphate (IPP) and dimethylallyl diphosphate (DMAPP), two major building blocks of isoprenoid compounds. Catalyzes the conversion of 4-diphosphocytidyl-2-C-methyl-D-erythritol 2-phosphate (CDP-ME2P) to 2-C-methyl-D-erythritol 2,4-cyclodiphosphate (ME-CPP) with a corresponding release of cytidine 5-monophosphate (CMP). The sequence is that of 2-C-methyl-D-erythritol 2,4-cyclodiphosphate synthase from Syntrophotalea carbinolica (strain DSM 2380 / NBRC 103641 / GraBd1) (Pelobacter carbinolicus).